A 359-amino-acid polypeptide reads, in one-letter code: Alanine racemase, biosynthetic (359 aa).

The active-site Proton acceptor; specific for D-alanine is the Lys34. Lys34 carries the post-translational modification N6-(pyridoxal phosphate)lysine. A substrate-binding site is contributed by Arg129. Catalysis depends on Tyr255, which acts as the Proton acceptor; specific for L-alanine. Met303 contacts substrate.

Belongs to the alanine racemase family. Requires pyridoxal 5'-phosphate as cofactor.

The enzyme catalyses L-alanine = D-alanine. The protein operates within amino-acid biosynthesis; D-alanine biosynthesis; D-alanine from L-alanine: step 1/1. It functions in the pathway cell wall biogenesis; peptidoglycan biosynthesis. In terms of biological role, catalyzes the interconversion of L-alanine and D-alanine. Provides the D-alanine required for cell wall biosynthesis. This is Alanine racemase, biosynthetic (alr) from Salmonella typhi.